A 131-amino-acid chain; its full sequence is Ribosome-binding factor A (131 aa).

The protein belongs to the RbfA family. As to quaternary structure, monomer. Binds 30S ribosomal subunits, but not 50S ribosomal subunits or 70S ribosomes.

The protein resides in the cytoplasm. One of several proteins that assist in the late maturation steps of the functional core of the 30S ribosomal subunit. Associates with free 30S ribosomal subunits (but not with 30S subunits that are part of 70S ribosomes or polysomes). Required for efficient processing of 16S rRNA. May interact with the 5'-terminal helix region of 16S rRNA. This is Ribosome-binding factor A from Gloeothece citriformis (strain PCC 7424) (Cyanothece sp. (strain PCC 7424)).